The chain runs to 321 residues: Glutaminase (321 aa).

Substrate contacts are provided by Ser-69, Asn-120, Glu-165, Asn-172, Tyr-196, Tyr-248, and Val-266.

Belongs to the glutaminase family. In terms of assembly, homotetramer.

It catalyses the reaction L-glutamine + H2O = L-glutamate + NH4(+). This is Glutaminase from Bacteroides fragilis (strain YCH46).